The following is a 469-amino-acid chain: 3-isopropylmalate dehydratase large subunit (469 aa).

[4Fe-4S] cluster is bound by residues Cys347, Cys408, and Cys411.

Belongs to the aconitase/IPM isomerase family. LeuC type 1 subfamily. As to quaternary structure, heterodimer of LeuC and LeuD. The cofactor is [4Fe-4S] cluster.

It catalyses the reaction (2R,3S)-3-isopropylmalate = (2S)-2-isopropylmalate. It functions in the pathway amino-acid biosynthesis; L-leucine biosynthesis; L-leucine from 3-methyl-2-oxobutanoate: step 2/4. Catalyzes the isomerization between 2-isopropylmalate and 3-isopropylmalate, via the formation of 2-isopropylmaleate. In Haemophilus influenzae (strain PittEE), this protein is 3-isopropylmalate dehydratase large subunit.